A 452-amino-acid chain; its full sequence is Glutamate--tRNA ligase 2 (452 aa).

Positions 8–18 match the 'HIGH' region motif; it reads PSPTGRLHVGN. The short motif at 246–250 is the 'KMSKS' region element; the sequence is KLSKR. K249 is a binding site for ATP.

Belongs to the class-I aminoacyl-tRNA synthetase family. Glutamate--tRNA ligase type 1 subfamily. In terms of assembly, monomer.

The protein localises to the cytoplasm. The catalysed reaction is tRNA(Glu) + L-glutamate + ATP = L-glutamyl-tRNA(Glu) + AMP + diphosphate. In terms of biological role, catalyzes the attachment of glutamate to tRNA(Glu) in a two-step reaction: glutamate is first activated by ATP to form Glu-AMP and then transferred to the acceptor end of tRNA(Glu). This chain is Glutamate--tRNA ligase 2, found in Erythrobacter litoralis (strain HTCC2594).